The following is a 489-amino-acid chain: UDP-N-acetylmuramoyl-L-alanyl-D-glutamate--2,6-diaminopimelate ligase (489 aa).

Serine 34 contacts UDP-N-acetyl-alpha-D-muramoyl-L-alanyl-D-glutamate. ATP is bound at residue 110–116 (GTAGKTS). UDP-N-acetyl-alpha-D-muramoyl-L-alanyl-D-glutamate is bound by residues 152 to 153 (TT), serine 179, glutamine 185, and arginine 187. N6-carboxylysine is present on lysine 219. Meso-2,6-diaminopimelate contacts are provided by residues arginine 383, 407-410 (DNPR), glycine 455, and glutamate 459. The short motif at 407-410 (DNPR) is the Meso-diaminopimelate recognition motif element.

The protein belongs to the MurCDEF family. MurE subfamily. Mg(2+) is required as a cofactor. In terms of processing, carboxylation is probably crucial for Mg(2+) binding and, consequently, for the gamma-phosphate positioning of ATP.

The protein localises to the cytoplasm. The enzyme catalyses UDP-N-acetyl-alpha-D-muramoyl-L-alanyl-D-glutamate + meso-2,6-diaminopimelate + ATP = UDP-N-acetyl-alpha-D-muramoyl-L-alanyl-gamma-D-glutamyl-meso-2,6-diaminopimelate + ADP + phosphate + H(+). It functions in the pathway cell wall biogenesis; peptidoglycan biosynthesis. Functionally, catalyzes the addition of meso-diaminopimelic acid to the nucleotide precursor UDP-N-acetylmuramoyl-L-alanyl-D-glutamate (UMAG) in the biosynthesis of bacterial cell-wall peptidoglycan. This is UDP-N-acetylmuramoyl-L-alanyl-D-glutamate--2,6-diaminopimelate ligase from Agrobacterium fabrum (strain C58 / ATCC 33970) (Agrobacterium tumefaciens (strain C58)).